The chain runs to 757 residues: MTSTTAARTASSRVGATTLLTIVVLALAWFVGFASRLFAIVRFESIIHEFDPWFNYRATHHMVQHGFYKFLNWFDERAWYPLGRIVGGTVYPGLMVTSGLIHWILDSLNFHVHIREVCVFLAPTFSGLTAIATYLLTKELWSPGAGLFAACFIAISPGYTSRSVAGSYDNEGIAIFALQFTYYLWVKSLKTGSIMWASLCALSYFYMVSAWGGYVFIINLIPLHALALIIMGRYSSRLFVSYTSFYCLATILSMQVPFVGFQPVRTSEHMPAFGVFGLLQIVALMHYARNRITRQQFMTLFVGGLTILGALSVVVYFALVWGGYVAPFSGRFYSLWDTGYAKIHIPIIASVSEHQPTTWVSFFFDLHITAAVFPVGLWYCIKKVNDERVFIILYAVSAVYFAGVMVRLMLTLTPAVCVLAGIGFSYTFEKYLKDEETKERSSSQSGTTKDEKLYDKAAKNVKSRNANDGDESGVSSNVRTIISIILVIFLLMFVVHATYVTSNAYSHPSVVLQSSTNNGDRIIMDDFREAYHWLRENTADDARVMSWWDYGYQIAGMANRTTLVDNNTWNNSHIALVGKAMSSNESAAYEIMTELDVDYILVIFGGVIGYSGDDINKFLWMVRIAQGEHPKDIREENYFTSTGEYSTGAGASETMLNCLMYKMSYYRFGETRVGYNQAGGFDRTRGYVIGKKDITLEYIEEAYTTENWLVRIYKRKKLPNRPTVKSEEATIPIKGKKATQGKNKKGVIRPAPTASKA.

Topologically, residues 1–13 (MTSTTAARTASSR) are cytoplasmic. The chain crosses the membrane as a helical span at residues 14 to 34 (VGATTLLTIVVLALAWFVGFA). At 35–121 (SRLFAIVRFE…VHIREVCVFL (87 aa)) the chain is on the lumenal side. Residues 49–51 (EFD) carry the DXD motif 1 motif. Asp51 serves as a coordination point for Mn(2+). A helical membrane pass occupies residues 122–140 (APTFSGLTAIATYLLTKEL). Over 141–142 (WS) the chain is Cytoplasmic. Residues 143-160 (PGAGLFAACFIAISPGYT) traverse the membrane as a helical segment. Residues 161–171 (SRSVAGSYDNE) lie on the Lumenal side of the membrane. Positions 169 and 171 each coordinate Mn(2+). The DXD motif 2 motif lies at 169 to 171 (DNE). Residues 172–191 (GIAIFALQFTYYLWVKSLKT) traverse the membrane as a helical segment. Residues 192-193 (GS) lie on the Cytoplasmic side of the membrane. A helical transmembrane segment spans residues 194 to 208 (IMWASLCALSYFYMV). At 209-210 (SA) the chain is on the lumenal side. 2 consecutive transmembrane segments (helical) span residues 211–235 (WGGY…GRYS) and 236–261 (SRLF…FVGF). Residues 262–269 (QPVRTSEH) lie on the Lumenal side of the membrane. Residues 270–289 (MPAFGVFGLLQIVALMHYAR) form a helical membrane-spanning segment. Residues 290-299 (NRITRQQFMT) lie on the Cytoplasmic side of the membrane. The helical transmembrane segment at 300 to 320 (LFVGGLTILGALSVVVYFALV) threads the bilayer. Over 321 to 358 (WGGYVAPFSGRFYSLWDTGYAKIHIPIIASVSEHQPTT) the chain is Lumenal. Positions 350-353 (SVSE) match the SVSE motif motif. A helical membrane pass occupies residues 359-381 (WVSFFFDLHITAAVFPVGLWYCI). Topologically, residues 382-387 (KKVNDE) are cytoplasmic. The chain crosses the membrane as a helical span at residues 388-404 (RVFIILYAVSAVYFAGV). The Lumenal portion of the chain corresponds to 405-408 (MVRL). Arg407 is a binding site for dolichyl diphosphooligosaccharide. A helical transmembrane segment spans residues 409-430 (MLTLTPAVCVLAGIGFSYTFEK). Residues 431–469 (YLKDEETKERSSSQSGTTKDEKLYDKAAKNVKSRNANDG) lie on the Cytoplasmic side of the membrane. The helical transmembrane segment at 470-495 (DESGVSSNVRTIISIILVIFLLMFVV) threads the bilayer. Residues 496-757 (HATYVTSNAY…IRPAPTASKA (262 aa)) lie on the Lumenal side of the membrane. The tract at residues 547 to 549 (WWD) is interacts with target acceptor peptide in protein substrate. The short motif at 547-551 (WWDYG) is the WWDYG motif element. Tyr552 serves as a coordination point for dolichyl diphosphooligosaccharide. Asn559 and Asn566 each carry an N-linked (GlcNAc...) asparagine glycan. Asn570 carries an N-linked (GlcNAc...) (high mannose) asparagine glycan. A glycan (N-linked (GlcNAc...) asparagine) is linked at Asn584. Positions 614 to 621 (DINKFLWM) match the DK motif motif. The tract at residues 721 to 757 (RPTVKSEEATIPIKGKKATQGKNKKGVIRPAPTASKA) is disordered. A compositionally biased stretch (basic residues) spans 734 to 747 (KGKKATQGKNKKGV).

It belongs to the STT3 family. As to quaternary structure, component of the oligosaccharyltransferase (OST) complex. Mg(2+) is required as a cofactor. The cofactor is Mn(2+).

It localises to the endoplasmic reticulum membrane. The catalysed reaction is a di-trans,poly-cis-dolichyl diphosphooligosaccharide + L-asparaginyl-[protein] = N(4)-(oligosaccharide-(1-&gt;4)-N-acetyl-beta-D-glucosaminyl-(1-&gt;4)-N-acetyl-beta-D-glucosaminyl)-L-asparaginyl-[protein] + a di-trans,poly-cis-dolichyl diphosphate + H(+). It functions in the pathway protein modification; protein glycosylation. In terms of biological role, catalytic subunit of the oligosaccharyl transferase (OST) complex that catalyzes the initial transfer of a defined glycan (Glc(3)Man(9)GlcNAc(2) in eukaryotes) from the lipid carrier dolichol-pyrophosphate to an asparagine residue within an Asn-X-Ser/Thr consensus motif in nascent polypeptide chains, the first step in protein N-glycosylation. N-glycosylation occurs cotranslationally and the complex associates with the Sec61 complex at the channel-forming translocon complex that mediates protein translocation across the endoplasmic reticulum (ER). All subunits are required for a maximal enzyme activity. This subunit contains the active site and the acceptor peptide and donor lipid-linked oligosaccharide (LLO) binding pockets. This chain is Dolichyl-diphosphooligosaccharide--protein glycosyltransferase subunit stt-3, found in Caenorhabditis elegans.